We begin with the raw amino-acid sequence, 363 residues long: Sulfate/thiosulfate import ATP-binding protein CysA (363 aa).

Positions Ile-3 to Leu-237 constitute an ABC transporter domain. Position 35 to 42 (Gly-35 to Thr-42) interacts with ATP.

Belongs to the ABC transporter superfamily. Sulfate/tungstate importer (TC 3.A.1.6) family. In terms of assembly, the complex is composed of two ATP-binding proteins (CysA), two transmembrane proteins (CysT and CysW) and a solute-binding protein (CysP).

Its subcellular location is the cell inner membrane. The enzyme catalyses sulfate(out) + ATP + H2O = sulfate(in) + ADP + phosphate + H(+). It catalyses the reaction thiosulfate(out) + ATP + H2O = thiosulfate(in) + ADP + phosphate + H(+). Functionally, part of the ABC transporter complex CysAWTP involved in sulfate/thiosulfate import. Responsible for energy coupling to the transport system. This chain is Sulfate/thiosulfate import ATP-binding protein CysA, found in Yersinia pestis.